The following is a 218-amino-acid chain: Cytochrome b6 (218 aa).

Residues 35 to 55 (IFYCLGGITLVCFLIQFATGF) form a helical membrane-spanning segment. Cysteine 38 is a binding site for heme c. Residues histidine 89 and histidine 103 each contribute to the heme b site. The next 3 helical transmembrane spans lie at 93–113 (ASMM…TGGF), 119–139 (LTWV…VTGY), and 189–209 (LHTF…FLMI). Heme b is bound by residues histidine 190 and histidine 205.

It belongs to the cytochrome b family. PetB subfamily. The 4 large subunits of the cytochrome b6-f complex are cytochrome b6, subunit IV (17 kDa polypeptide, PetD), cytochrome f and the Rieske protein, while the 4 small subunits are PetG, PetL, PetM and PetN. The complex functions as a dimer. The cofactor is heme b. Requires heme c as cofactor.

It is found in the cellular thylakoid membrane. Functionally, component of the cytochrome b6-f complex, which mediates electron transfer between photosystem II (PSII) and photosystem I (PSI), cyclic electron flow around PSI, and state transitions. This is Cytochrome b6 from Synechococcus sp. (strain RCC307).